A 207-amino-acid chain; its full sequence is Large ribosomal subunit protein bL25 (207 aa).

The protein belongs to the bacterial ribosomal protein bL25 family. CTC subfamily. In terms of assembly, part of the 50S ribosomal subunit; part of the 5S rRNA/L5/L18/L25 subcomplex. Contacts the 5S rRNA. Binds to the 5S rRNA independently of L5 and L18.

This is one of the proteins that binds to the 5S RNA in the ribosome where it forms part of the central protuberance. This Orientia tsutsugamushi (strain Boryong) (Rickettsia tsutsugamushi) protein is Large ribosomal subunit protein bL25.